A 1172-amino-acid polypeptide reads, in one-letter code: MRTVCYGKRERLTFGRIHDAVKVPNLISIQIDSYKDFLENGLIEVLKKFSPITSQPHKGDLKKGEKGFVLEFVSTKVGQPNAPVEECKQKGLTYTVPVYTTVRITDVNTGEMREEEAFLGSIPHMTENGTFIINGAERVIVSQLVRAPGVYFVDEIPKTQVVSPIYVAHFLPVRGAWLELLYYSADNMFYARIDRKRRINLFLLFKALGFTDDLEILDLFPDPIDADDEYTMEKAVGSIILHDVVLDGKKIVERGGVLTKAASQAILESKIATVVRAHPAAQKTLEKMVDTYGEVDSSKAYVEIFRKLKPGEIPRVNTAKAYLTSLYFSTERFELSDVGRYKINKRLTQAYRRYLAQVKGLPEEEVESVEYNPEDPVLTPMDIVLASRYLLDVSKNPEIMDTKDHLGNKRVRTVGELIKLEFERAFARAQRLIQERLTLYASLDKISIQSLINVKTIIAGINQFFATSPLSQFMEQVNPLAELTHKRRLTAVGPGGLKRERARFEVRDVHHSHYGRMCPIETPEGANIGLITSLAVYANIDKFGFLTTPYRKVVNGVVTSEIVYLTADEEEHYNIAPCTIKIDKDGRILDERVPVRFMERLQFVEKNKVQFMDVSTKQIVSVSTSLIPFLEHDDANRALMGSNMQRQAVPLVKPEAPFVATGVEYDAALYSGYVVQAKYSGRVKKVDSRKIVIERMDENGKPVLKNGKPVLDEYRLMKFMRTNQDTTVNQRPIVDIGDIVKAGDVIADGPATDMGELALGKNVLVAFMPWEGYNFEDAILVSEELLEEDTFTSIHIEVYETQARDTRLGPEEITVDIPNVSKEALRNLDENGIVRVGAYVGPQDILVGKVTPKGEGETTPEEKIIRSVFGERGKDVKDTSLRLPHGTDGRVIDVKVFDKDEETDLGAGVNKLVKVYVACRKTLEVGDKLAGRHGNKGVVSKILPKEDMPFLPDGTPVQLVLSPLGVPSRMNVGQILETHLGWLAKLTRNWFATPVFDGAKENEILPWLYEERRAVGLEEGDSDNEPSGKVVLRDGRTGESFAEPIVVGYIYMMKLVHIAKDKIHARSTGPYSLIHQQPLGGKAQFGGQRFGEMEVWALEAHGAAHTLNEMLTIKSDDIKGRNEVYKAILKGKNIPEPGIPESFRVLIKELRGLALDIRVYDENGNEIDIDRV.

This sequence belongs to the RNA polymerase beta chain family. The RNAP catalytic core consists of 2 alpha, 1 beta, 1 beta' and 1 omega subunit. When a sigma factor is associated with the core the holoenzyme is formed, which can initiate transcription.

The catalysed reaction is RNA(n) + a ribonucleoside 5'-triphosphate = RNA(n+1) + diphosphate. Functionally, DNA-dependent RNA polymerase catalyzes the transcription of DNA into RNA using the four ribonucleoside triphosphates as substrates. In Pseudothermotoga lettingae (strain ATCC BAA-301 / DSM 14385 / NBRC 107922 / TMO) (Thermotoga lettingae), this protein is DNA-directed RNA polymerase subunit beta.